Reading from the N-terminus, the 125-residue chain is Ribosome-binding factor A (125 aa).

It belongs to the RbfA family. In terms of assembly, monomer. Binds 30S ribosomal subunits, but not 50S ribosomal subunits or 70S ribosomes.

The protein resides in the cytoplasm. One of several proteins that assist in the late maturation steps of the functional core of the 30S ribosomal subunit. Associates with free 30S ribosomal subunits (but not with 30S subunits that are part of 70S ribosomes or polysomes). Required for efficient processing of 16S rRNA. May interact with the 5'-terminal helix region of 16S rRNA. This is Ribosome-binding factor A from Acidovorax sp. (strain JS42).